Consider the following 191-residue polypeptide: 7-methyl-GTP pyrophosphatase (191 aa).

Catalysis depends on Asp70, which acts as the Proton acceptor.

Belongs to the Maf family. YceF subfamily. A divalent metal cation is required as a cofactor.

It is found in the cytoplasm. The catalysed reaction is N(7)-methyl-GTP + H2O = N(7)-methyl-GMP + diphosphate + H(+). Functionally, nucleoside triphosphate pyrophosphatase that hydrolyzes 7-methyl-GTP (m(7)GTP). May have a dual role in cell division arrest and in preventing the incorporation of modified nucleotides into cellular nucleic acids. The polypeptide is 7-methyl-GTP pyrophosphatase (Xanthomonas oryzae pv. oryzae (strain KACC10331 / KXO85)).